A 191-amino-acid chain; its full sequence is MSSLWIAIAAVSAIALVSGLILGFAARRFQVEADPIVERIDALLPQSQCGQCGYPGCRPYAEAVANGEKINRCAPGGEAVMRNIAALLAVDPQPLEGDGVQSEPQRQVALIDEANCIGCTKCIQSCPVDAIVGATRALHTVISDQCTGCGLCLPPCPTSCIQLVPVPTTTATWKWNLQTIPVHILEVERHV.

Residues 1 to 26 form a hydrophobic region; sequence MSSLWIAIAAVSAIALVSGLILGFAA. The 59-residue stretch at 32–90 folds into the 4Fe-4S domain; it reads EADPIVERIDALLPQSQCGQCGYPGCRPYAEAVANGEKINRCAPGGEAVMRNIAALLAV. The [4Fe-4S] cluster site is built by Cys-49, Cys-52, Cys-57, Cys-73, Cys-116, Cys-119, Cys-122, Cys-126, Cys-146, Cys-149, Cys-152, and Cys-156. 4Fe-4S ferredoxin-type domains lie at 107-136 and 137-166; these read QVALIDEANCIGCTKCIQSCPVDAIVGATR and ALHTVISDQCTGCGLCLPPCPTSCIQLVPV.

This sequence belongs to the 4Fe4S bacterial-type ferredoxin family. RnfB subfamily. The complex is composed of six subunits: RnfA, RnfB, RnfC, RnfD, RnfE and RnfG. [4Fe-4S] cluster serves as cofactor.

The protein resides in the cell inner membrane. In terms of biological role, part of a membrane-bound complex that couples electron transfer with translocation of ions across the membrane. This is Ion-translocating oxidoreductase complex subunit B from Edwardsiella ictaluri (strain 93-146).